We begin with the raw amino-acid sequence, 319 residues long: MTSRTNEFFGLTKNGDIDAANIPLKRISYTDPFLAEGYRIHETIVNLLVFLKKIRGAYLKDRTFSNVQRLSKPLMECSLEELSKLELDEVQRDEIEHEVSSAISSCIHQIAKLQEIVKEQQSQIPKKSGWLQGLRDPSKLSKKETLVAHHSSVLWYLQSELSDVSSVLYHLQDLRLKRGQEKRNIASDFLTKNPTDENSAVEIPESELQTFFTQQQLQELEQENDVLLQEFEHTMERLRDTGKSLADITRLQSEISAQLSIQSSAAEKLYDDALNVMDSLSGGNQQLIKAKSRSSRTARLLFCIFTVMGLLLLSLDRIV.

Residues 1-297 (MTSRTNEFFG…IKAKSRSSRT (297 aa)) are Cytoplasmic-facing. The region spanning 228–290 (LQEFEHTMER…SGGNQQLIKA (63 aa)) is the t-SNARE coiled-coil homology domain. Residues 298–315 (ARLLFCIFTVMGLLLLSL) traverse the membrane as a helical; Anchor for type IV membrane protein segment. The Lumenal segment spans residues 316 to 319 (DRIV).

Belongs to the syntaxin family. Component of a SNARE complex consisting of ufe1, use1, sec20 and sec22 or ykt6. Interacts with sad1.

The protein localises to the endoplasmic reticulum membrane. In terms of biological role, syntaxin required for targeting and fusion of Golgi-derived retrograde transport vesicles with the ER. This chain is Syntaxin ufe1 (ufe1), found in Schizosaccharomyces pombe (strain 972 / ATCC 24843) (Fission yeast).